The chain runs to 338 residues: MNVFYDKDADLSLIKGKQVTIIGYGSQGHAHALNLKDSGVNVTVGLRKGGASWSKAENAGLAVKEVAEAVKGADVVMMLLPDEQIADVYAKEVHANIKQGAALAFAHGFNVHYGQVIPRADLDVIMIAPKAPGHTVRGTYSQGGGVPHLIAVAQNKSGAARDIALSYAAANGGGRAGIIETNFREETETDLFGEQAVLCGGTVELIKAGFETLVEAGYAPEMAYFECLHELKLIVDLIYEGGIANMNYSISNNAEYGEYVTGPRVVTEETKKAMKQCLTDIQTGEYAKSFILENKAAAPTLQSRRRLTAEHQIEQVGAKLRAMMPWIAKNKLVDQTKN.

Residues 1 to 181 form the KARI N-terminal Rossmann domain; the sequence is MNVFYDKDAD…GGGRAGIIET (181 aa). NADP(+) is bound by residues 24–27, Arg47, and Ser52; that span reads YGSQ. His107 is an active-site residue. Position 133 (Gly133) interacts with NADP(+). In terms of domain architecture, KARI C-terminal knotted spans 182–327; the sequence is NFREETETDL…AKLRAMMPWI (146 aa). Residues Asp190, Glu194, Glu226, and Glu230 each coordinate Mg(2+). Residue Ser251 coordinates substrate.

The protein belongs to the ketol-acid reductoisomerase family. It depends on Mg(2+) as a cofactor.

It carries out the reaction (2R)-2,3-dihydroxy-3-methylbutanoate + NADP(+) = (2S)-2-acetolactate + NADPH + H(+). It catalyses the reaction (2R,3R)-2,3-dihydroxy-3-methylpentanoate + NADP(+) = (S)-2-ethyl-2-hydroxy-3-oxobutanoate + NADPH + H(+). The protein operates within amino-acid biosynthesis; L-isoleucine biosynthesis; L-isoleucine from 2-oxobutanoate: step 2/4. It functions in the pathway amino-acid biosynthesis; L-valine biosynthesis; L-valine from pyruvate: step 2/4. Functionally, involved in the biosynthesis of branched-chain amino acids (BCAA). Catalyzes an alkyl-migration followed by a ketol-acid reduction of (S)-2-acetolactate (S2AL) to yield (R)-2,3-dihydroxy-isovalerate. In the isomerase reaction, S2AL is rearranged via a Mg-dependent methyl migration to produce 3-hydroxy-3-methyl-2-ketobutyrate (HMKB). In the reductase reaction, this 2-ketoacid undergoes a metal-dependent reduction by NADPH to yield (R)-2,3-dihydroxy-isovalerate. This Burkholderia multivorans (strain ATCC 17616 / 249) protein is Ketol-acid reductoisomerase (NADP(+)).